The sequence spans 82 residues: UPF0298 protein SPCG_0698 (82 aa).

It belongs to the UPF0298 family.

It localises to the cytoplasm. The chain is UPF0298 protein SPCG_0698 from Streptococcus pneumoniae (strain CGSP14).